The chain runs to 636 residues: Sodium-dependent nutrient amino acid transporter 1 (636 aa).

The segment at 1 to 40 is disordered; the sequence is MELKTMPQNGANNGNPQGNTSNNNNTNDSSNSNSNNNNKT. Residues 1–50 lie on the Cytoplasmic side of the membrane; that stretch reads MELKTMPQNGANNGNPQGNTSNNNNTNDSSNSNSNNNNKTERTNWSNGLE. Positions 7-40 are enriched in low complexity; it reads PQNGANNGNPQGNTSNNNNTNDSSNSNSNNNNKT. Helical transmembrane passes span 51–71, 78–98, and 131–151; these read FLMS…FPFT, GAFL…MYYL, and TICI…YLAV. The N-linked (GlcNAc...) asparagine glycan is linked to Asn184. 9 helical membrane passes run 225–245, 254–274, 303–323, 337–357, 397–417, 436–456, 469–489, 511–531, and 547–567; these read PDWK…LVIM, AAYF…GRAV, AVVQ…MFSS, IVTT…FAIL, LFSA…IVAL, VALV…TPGG, TYVV…IYGV, CWLI…MVTI, and VAGW…GWWY.

This sequence belongs to the sodium:neurotransmitter symporter (SNF) (TC 2.A.22) family.

Its subcellular location is the membrane. In terms of biological role, unusual broad substrate spectrum amino acid:sodium cotransporter that promotes absorption of the D isomers of essential amino acids. Neutral amino acids are the preferred substrates, especially methionine and phenylalanine. The polypeptide is Sodium-dependent nutrient amino acid transporter 1 (Drosophila grimshawi (Hawaiian fruit fly)).